The sequence spans 310 residues: Homeobox protein dsc-1 (310 aa).

A DNA-binding region (homeobox) is located at residues 180 to 239; the sequence is RRRFRTNFTELQSTFLEDSFKESHYPDHKAKKYMADFLKIPEDRITVWFQNRRAKWRRKE. Residues 262-310 form a disordered region; the sequence is CFSAQHPDDGPNAKHPNSFGIPNQPMSLDQFPMNTEQDFPEFPSLQEHQ. The span at 281–298 shows a compositional bias: polar residues; that stretch reads GIPNQPMSLDQFPMNTEQ.

In terms of tissue distribution, expressed in the bilateral sensory neurons AWA, AWB, AWC, ASE, FLP and PVD. Also expressed in the enteric intestinal and anal depressor muscles.

The protein resides in the nucleus. It localises to the cell projection. The protein localises to the axon. It is found in the cytoplasm. Transcriptional regulator which plays a role in the expulsion step of defecation by controlling enteric muscle-specific expression of exp-1 which is required for enteric muscle contraction. Not required for exp-1 expression in the PDA neuron. Also involved in controlling the length of the defecation cycle. The sequence is that of Homeobox protein dsc-1 from Caenorhabditis elegans.